The primary structure comprises 220 residues: Uracil-DNA glycosylase 1 (220 aa).

Aspartate 65 serves as the catalytic Proton acceptor.

The protein belongs to the uracil-DNA glycosylase (UDG) superfamily. UNG family.

It is found in the cytoplasm. The enzyme catalyses Hydrolyzes single-stranded DNA or mismatched double-stranded DNA and polynucleotides, releasing free uracil.. Functionally, excises uracil residues from the DNA which can arise as a result of misincorporation of dUMP residues by DNA polymerase or due to deamination of cytosine. The polypeptide is Uracil-DNA glycosylase 1 (Bacteroides fragilis (strain YCH46)).